Here is a 1564-residue protein sequence, read N- to C-terminus: ATP-dependent permease PDR10 (1564 aa).

Polar residues predominate over residues 1 to 16 (MLQAPSSSNSGLNQGN). The segment at 1–37 (MLQAPSSSNSGLNQGNAAPDGPPNETQPYEGLDAAAQ) is disordered. At 1–587 (MLQAPSSSNS…AAIFFAILFN (587 aa)) the chain is on the cytoplasmic side. Residues 174-430 (ISRRLFHRTH…FQRMGYVCPE (257 aa)) enclose the ABC transporter 1 domain. 5 consecutive transmembrane segments (helical) span residues 588 to 608 (AFSS…TEKH), 624 to 644 (TFSD…PYYF), 674 to 694 (RCIG…SVLL), 699 to 719 (MYTG…WISY), and 732 to 752 (INEF…GPNY). A glycan (N-linked (GlcNAc...) asparagine) is linked at asparagine 754. Basic residues predominate over residues 839-849 (KGIVSEKKKKN). Residues 839 to 872 (KGIVSEKKKKNQPTLSTSDAEKDVEMNNNSSATD) form a disordered region. A helical membrane pass occupies residues 841–861 (IVSEKKKKNQPTLSTSDAEKD). Residues 862-1304 (VEMNNNSSAT…IFMFTVVFNP (443 aa)) are Cytoplasmic-facing. The ABC transporter 2 domain maps to 923–1166 (FHWKNLCYDI…MINYFEAHGA (244 aa)). 959 to 966 (GASGAGKT) contacts ATP. The next 6 membrane-spanning stretches (helical) occupy residues 1305 to 1325 (ILQQ…ARER), 1340 to 1360 (ILVE…VYYY), 1390 to 1410 (VYIS…ENAA), 1426 to 1446 (VLAT…VSPL), 1459 to 1479 (ANAS…PSGM), and 1491 to 1511 (STGT…FCQF). Topologically, residues 1512 to 1564 (SSTNDYLATVSSSYSRRWMNYGIFSAYIVFDYCAAIFLYWLVRVPKKSKKLKK) are cytoplasmic.

The protein belongs to the ABC transporter superfamily. ABCG family. PDR (TC 3.A.1.205) subfamily.

It is found in the membrane. This chain is ATP-dependent permease PDR10 (PDR10), found in Saccharomyces cerevisiae (strain ATCC 204508 / S288c) (Baker's yeast).